We begin with the raw amino-acid sequence, 817 residues long: Phosphoenolpyruvate synthase (817 aa).

The active-site Tele-phosphohistidine intermediate is the H442. Substrate contacts are provided by R540, R587, E684, G706, T707, N708, and D709. Residue E684 coordinates Mg(2+). A Mg(2+)-binding site is contributed by D709. C756 acts as the Proton donor in catalysis.

Belongs to the PEP-utilizing enzyme family. In terms of assembly, homooctamer. Mg(2+) serves as cofactor.

It carries out the reaction pyruvate + ATP + H2O = phosphoenolpyruvate + AMP + phosphate + 2 H(+). It functions in the pathway carbohydrate biosynthesis; gluconeogenesis. Functionally, catalyzes the phosphorylation of pyruvate to phosphoenolpyruvate. This Pyrococcus furiosus (strain ATCC 43587 / DSM 3638 / JCM 8422 / Vc1) protein is Phosphoenolpyruvate synthase (ppsA).